A 179-amino-acid chain; its full sequence is Large ribosomal subunit protein uL5 (179 aa).

The protein belongs to the universal ribosomal protein uL5 family. As to quaternary structure, part of the 50S ribosomal subunit; part of the 5S rRNA/L5/L18/L25 subcomplex. Contacts the 5S rRNA and the P site tRNA. Forms a bridge to the 30S subunit in the 70S ribosome.

Its function is as follows. This is one of the proteins that bind and probably mediate the attachment of the 5S RNA into the large ribosomal subunit, where it forms part of the central protuberance. In the 70S ribosome it contacts protein S13 of the 30S subunit (bridge B1b), connecting the 2 subunits; this bridge is implicated in subunit movement. Contacts the P site tRNA; the 5S rRNA and some of its associated proteins might help stabilize positioning of ribosome-bound tRNAs. This chain is Large ribosomal subunit protein uL5, found in Pseudomonas entomophila (strain L48).